A 384-amino-acid polypeptide reads, in one-letter code: Acetylornithine aminotransferase (384 aa).

Residues 95-96 (GA) and F122 contribute to the pyridoxal 5'-phosphate site. R125 provides a ligand contact to N(2)-acetyl-L-ornithine. 207–210 (DEIQ) is a pyridoxal 5'-phosphate binding site. K236 carries the N6-(pyridoxal phosphate)lysine modification. A N(2)-acetyl-L-ornithine-binding site is contributed by S264. Residue T265 coordinates pyridoxal 5'-phosphate.

The protein belongs to the class-III pyridoxal-phosphate-dependent aminotransferase family. ArgD subfamily. Homodimer. Requires pyridoxal 5'-phosphate as cofactor.

The protein localises to the cytoplasm. It catalyses the reaction N(2)-acetyl-L-ornithine + 2-oxoglutarate = N-acetyl-L-glutamate 5-semialdehyde + L-glutamate. The protein operates within amino-acid biosynthesis; L-arginine biosynthesis; N(2)-acetyl-L-ornithine from L-glutamate: step 4/4. The protein is Acetylornithine aminotransferase of Halalkalibacterium halodurans (strain ATCC BAA-125 / DSM 18197 / FERM 7344 / JCM 9153 / C-125) (Bacillus halodurans).